Here is a 607-residue protein sequence, read N- to C-terminus: Chaperone protein DnaK (607 aa).

Thr-174 carries the post-translational modification Phosphothreonine; by autocatalysis. The disordered stretch occupies residues 577–607; that stretch reads GYTASGPQGGPNPGGGQSGPDGNVNTDYKVY. Positions 583-595 are enriched in gly residues; sequence PQGGPNPGGGQSG.

The protein belongs to the heat shock protein 70 family.

Acts as a chaperone. The chain is Chaperone protein DnaK from Caldicellulosiruptor bescii (strain ATCC BAA-1888 / DSM 6725 / KCTC 15123 / Z-1320) (Anaerocellum thermophilum).